The primary structure comprises 222 residues: DNA-directed RNA polymerase V subunit 5A (222 aa).

Belongs to the archaeal Rpo5/eukaryotic RPB5 RNA polymerase subunit family. In terms of assembly, component of the RNA polymerase V complex. In terms of tissue distribution, expressed in roots, leaves, siliques and seeds, and to a lower level, in flower buds and flowers.

The protein localises to the nucleus. DNA-dependent RNA polymerase catalyzes the transcription of DNA into RNA using the four ribonucleoside triphosphates as substrates. Component of RNA polymerase V involved in RNA-directed DNA methylation-dependent (RdDM) silencing of endogenous repeated sequences, including transposable elements. Required for establishment of DNA methylation. This chain is DNA-directed RNA polymerase V subunit 5A (NRPE5A), found in Arabidopsis thaliana (Mouse-ear cress).